We begin with the raw amino-acid sequence, 84 residues long: Mu-conotoxin-like Cal 12.2d (84 aa).

The N-terminal stretch at 1–19 (MKLTCVLVVLLLVLPFGDL) is a signal peptide. A propeptide spanning residues 20–42 (ITTSNTEDNKRGATPWQNSLKAR) is cleaved from the precursor. Trp72 carries the 6'-bromotryptophan modification. 4-hydroxyproline is present on Pro77. 6'-bromotryptophan is present on Trp81.

Belongs to the conotoxin O1 superfamily. Post-translationally, contains 4 disulfide bonds. As to expression, expressed by the venom duct.

Its subcellular location is the secreted. Mu-conotoxins block voltage-gated sodium channels. This toxin reversibly blocks voltage-gated sodium channel in cephalopods, with no alteration in the voltage dependence of sodium conductance or on the kinetics of inactivation. The chain is Mu-conotoxin-like Cal 12.2d from Californiconus californicus (California cone).